The following is a 244-amino-acid chain: S-adenosyl-L-methionine-dependent Diels-Alderase iliD (244 aa).

Belongs to the class I-like SAM-binding methyltransferase superfamily. Erg6/SMT family. S-adenosyl-L-methionine serves as cofactor.

The catalysed reaction is 3-[(2E,4E,8S,10E,12Z)-4,8-dimethyltetradeca-2,4,10,12-tetraenoyl]-4-hydroxy-5-(4-hydroxyphenyl)-1,2-dihydropyridin-2-one = ilicicolin H. It functions in the pathway mycotoxin biosynthesis. Its function is as follows. S-adenosyl-l-methionine-dependent Diels-Alderase; part of the gene cluster that mediates the biosynthesis of ilicicolin H, a 4-hydroxy-2-pyridonealkaloid that has potent and broad antifungal activities by inhibiting the mitochondrial respiration chain. IliD catalyzes the Diels-Alder reaction that converts the acyclic 2-pyridone intermediate to 8-epi-ilicicolin H. The biosynthesis of ilicicolin H starts with formation of the tetramic acid by the hybrid PKS-NRPS synthetase iliA with the partnering trans-enoyl reductase iliB since iliA lacks a designated enoylreductase (ER) domain. The cytochrome P450 monooxygenase iliC then catalyzes the ring expansion of the tetramate to the acyclic 2-pyridone. The pericyclase iliD further converts the acyclic 2-pyridone into 8-epi-ilicicolin H. 8-epi-ilicicolin H might then spontaneously convert to ilicicolin H since ilicicolin H is produced in the absence of the epimerase iliE, in contrast to what was observed for the Talaromyces variabilis ilicolin H biosynthetic pathway. In Neonectria sp. (strain DH2), this protein is S-adenosyl-L-methionine-dependent Diels-Alderase iliD.